An 810-amino-acid polypeptide reads, in one-letter code: Volume-regulated anion channel subunit LRRC8A (810 aa).

M1 carries the post-translational modification N-acetylmethionine. Topologically, residues 1–23 are cytoplasmic; sequence MIPVTELRYFADTQPAYRILKPW. A helical transmembrane segment spans residues 24-47; that stretch reads WDVFTDYISIVMLMIAVFGGTLQV. The Extracellular segment spans residues 48–123; that stretch reads TQDKMICLPC…YENRLHWFAK (76 aa). 3 cysteine pairs are disulfide-bonded: C54/C310, C57/C65, and C113/C295. N66 and N83 each carry an N-linked (GlcNAc...) asparagine glycan. The chain crosses the membrane as a helical span at residues 124 to 142; it reads YFPYLVLLHTLIFLACSNF. Topologically, residues 143–264 are cytoplasmic; that stretch reads WFKFPRTSSK…EEGDIVYRLY (122 aa). The residue at position 200 (T200) is a Phosphothreonine. Position 202 is a phosphoserine (S202). Phosphothreonine is present on T215. The residue at position 217 (S217) is a Phosphoserine. Residues 265 to 286 traverse the membrane as a helical segment; it reads MRQTIIKVIKFILIICYTVYYV. Residues 287 to 316 are Extracellular-facing; that stretch reads HNIKFDVDCTVDIESLTGYRTYRCAHPLAT. Residues 317-341 traverse the membrane as a helical segment; that stretch reads LFKILASFYISLVIFYGLICMYTLW. Residues 342-810 are Cytoplasmic-facing; the sequence is WMLRRSLKKY…RLWRADKEQA (469 aa). 17 LRR repeats span residues 399-422, 423-445, 447-468, 469-492, 493-515, 518-542, 543-565, 567-589, 590-613, 615-637, 639-661, 662-684, 686-707, 708-730, 732-753, 754-776, and 778-801; these read ENKLRQLNLNNEWTLDKLRQRLTK, NAQDKLELHLFMLSGIPDTVFDL, ELEVLKLELIPDVTIPPSIAQL, TGLKELWLYHTAAKIEAPALAFLR, ENLRALHIKFTDIKEIPLWIYSL, LEELHLTGNLSAENNRYIVIDGLRE, LKRLKVLRLKSNLSKLPQVVTDV, VHLQKLSINNEGTKLIVLNSLKK, MANLTELELIRCDLERIPHSIFSL, NLQEIDLKDNNLKTIEEIISFQH, HRLTCLKLWYNHIAYIPIQIGNL, TNLERLYLNRNKIEKIPTQLFYC, KLRYLDLSHNNLTFLPADIGLL, QNLQNLAITANRIETLPPELFQC, KLRALHLGNNVLQSLPSRVGEL, TNLTQIELRGNRLECLPVELGEC, and LLKRSGLVVEEDLFNTLPPEVKER. The Di-leucine motif motif lies at 706–707; sequence LL.

This sequence belongs to the LRRC8 family. As to quaternary structure, heterohexamer; oligomerizes with other LRRC8 proteins (LRRC8B, LRRC8C, LRRC8D and/or LRRC8E) to form a heterohexamer. Can form homohexamers in vitro, but these have lower conductance than heterohexamers. In vivo, the subunit composition may depend primarily on expression levels, and heterooligomeric channels containing various proportions of the different LRRC8 proteins may coexist. Interact with GRB2. Interacts with NOX4; this interaction prevents the ubiquitin-mediated degradation of LRRC8A. Post-translationally, N-glycosylated. As to expression, expressed in brain, kidney, ovary, lung, liver, heart, and fetal brain and liver. Found at high levels in bone marrow; lower levels are detected in peripheral blood cells. Expressed on T-cells as well as on B-lineage cells.

It is found in the cell membrane. The protein localises to the lysosome membrane. It catalyses the reaction chloride(in) = chloride(out). It carries out the reaction iodide(out) = iodide(in). The catalysed reaction is taurine(out) = taurine(in). The enzyme catalyses L-aspartate(out) = L-aspartate(in). It catalyses the reaction L-glutamate(out) = L-glutamate(in). It carries out the reaction myo-inositol(out) = myo-inositol(in). The catalysed reaction is 2',3'-cGAMP(out) = 2',3'-cGAMP(in). Inhibited by (4-[(2-butyl-6,7-dichloro-2-cyclopentyl-2,3-dihydro-1-oxo-1H-inden-5-yl)oxy]butanoic acid), which plugs the channel like a cork in a bottle by binding in the extracellular selectivity filter and sterically occluding ion conduction. Lipids may block conduction in closed heterohexameric channels. Functionally, essential component of the volume-regulated anion channel (VRAC, also named VSOAC channel), an anion channel required to maintain a constant cell volume in response to extracellular or intracellular osmotic changes. The VRAC channel conducts iodide better than chloride and can also conduct organic osmolytes like taurine. Mediates efflux of amino acids, such as aspartate and glutamate, in response to osmotic stress. LRRC8A and LRRC8D are required for the uptake of the drug cisplatin. In complex with LRRC8C or LRRC8E, acts as a transporter of immunoreactive cyclic dinucleotide GMP-AMP (2'-3'-cGAMP), an immune messenger produced in response to DNA virus in the cytosol: mediates both import and export of 2'-3'-cGAMP, thereby promoting transfer of 2'-3'-cGAMP to bystander cells. In contrast, complexes containing LRRC8D inhibit transport of 2'-3'-cGAMP. Required for in vivo channel activity, together with at least one other family member (LRRC8B, LRRC8C, LRRC8D or LRRC8E); channel characteristics depend on the precise subunit composition. Can form functional channels by itself (in vitro). Involved in B-cell development: required for the pro-B cell to pre-B cell transition. Also required for T-cell development. Required for myoblast differentiation: VRAC activity promotes membrane hyperpolarization and regulates insulin-stimulated glucose metabolism and oxygen consumption. Also acts as a regulator of glucose-sensing in pancreatic beta cells: VRAC currents, generated in response to hypotonicity- or glucose-induced beta cell swelling, depolarize cells, thereby causing electrical excitation, leading to increase glucose sensitivity and insulin secretion. Also plays a role in lysosome homeostasis by forming functional lysosomal VRAC channels in response to low cytoplasmic ionic strength condition: lysosomal VRAC channels are necessary for the formation of large lysosome-derived vacuoles, which store and then expel excess water to maintain cytosolic water homeostasis. Acts as a key factor in NLRP3 inflammasome activation by modulating itaconate efflux and mitochondria function. This chain is Volume-regulated anion channel subunit LRRC8A, found in Homo sapiens (Human).